A 217-amino-acid chain; its full sequence is Small ribosomal subunit protein uS3 (217 aa).

The region spanning 40-110 (IRDLINKWFN…EVYINIHEVR (71 aa)) is the KH type-2 domain.

It belongs to the universal ribosomal protein uS3 family. In terms of assembly, part of the 30S ribosomal subunit. Forms a tight complex with proteins S10 and S14.

Binds the lower part of the 30S subunit head. Binds mRNA in the 70S ribosome, positioning it for translation. The sequence is that of Small ribosomal subunit protein uS3 from Rickettsia typhi (strain ATCC VR-144 / Wilmington).